Reading from the N-terminus, the 338-residue chain is Fructose-1,6-bisphosphatase class 1 (338 aa).

The Mg(2+) site is built by Glu-92, Asp-115, Leu-117, and Asp-118. Substrate contacts are provided by residues 118-121 (DGSS), Asn-211, Tyr-244, and Lys-274. Glu-280 is a Mg(2+) binding site.

The protein belongs to the FBPase class 1 family. As to quaternary structure, homotetramer. Mg(2+) is required as a cofactor.

It localises to the cytoplasm. The catalysed reaction is beta-D-fructose 1,6-bisphosphate + H2O = beta-D-fructose 6-phosphate + phosphate. It participates in carbohydrate biosynthesis; gluconeogenesis. This chain is Fructose-1,6-bisphosphatase class 1, found in Photobacterium profundum (strain SS9).